The following is a 448-amino-acid chain: Histidine--tRNA ligase (448 aa).

The protein belongs to the class-II aminoacyl-tRNA synthetase family. As to quaternary structure, homodimer.

It is found in the cytoplasm. It catalyses the reaction tRNA(His) + L-histidine + ATP = L-histidyl-tRNA(His) + AMP + diphosphate + H(+). In Treponema denticola (strain ATCC 35405 / DSM 14222 / CIP 103919 / JCM 8153 / KCTC 15104), this protein is Histidine--tRNA ligase.